The sequence spans 117 residues: Hainantoxin-XV.2 (117 aa).

The N-terminal stretch at M1–S20 is a signal peptide. The segment at A18–E55 is disordered. Residues S21–R56 constitute a propeptide that is removed on maturation. Over residues N23 to E55 the composition is skewed to basic and acidic residues. Cystine bridges form between C58/C72, C65/C78, C69/C115, and C71/C91.

It belongs to the neurotoxin 03 (Tx2) family. 02 subfamily. HNTX-XV sub-subfamily. In terms of tissue distribution, expressed by the venom gland.

The protein localises to the secreted. In terms of biological role, putative ion channel inhibitor. This is Hainantoxin-XV.2 from Cyriopagopus hainanus (Chinese bird spider).